The chain runs to 390 residues: Protein phosphatase 1B (390 aa).

Basic and acidic residues predominate over residues 1-14 (MGAFLDKPKTEKHN). The segment at 1–20 (MGAFLDKPKTEKHNAHGAGN) is disordered. A lipid anchor (N-myristoyl glycine) is attached at Gly2. Lys12 is covalently cross-linked (Glycyl lysine isopeptide (Lys-Gly) (interchain with G-Cter in ISG15)). One can recognise a PPM-type phosphatase domain in the interval 23–295 (RYGLSSMQGW…DNMSVVLVCF (273 aa)). Mn(2+) is bound by residues Asp60, Gly61, Asp243, and Asp286. A disordered region spans residues 371-390 (NPHKDNDGGAGDLEDSLVAL). The residue at position 386 (Ser386) is a Phosphoserine.

The protein belongs to the PP2C family. As to quaternary structure, monomer. Interacts with PAK6. Interacts with the phosphorylated form of IKBKB/IKKB. Mg(2+) serves as cofactor. It depends on Mn(2+) as a cofactor. In terms of processing, isgylation negatively regulates its activity. Post-translationally, N-myristoylation is essential for the recognition of its substrates for dephosphorylation. Isoform 1: Expressed ubiquitously. Isoform 2: Expressed exclusively in testis and intestine. Isoform 3: Expressed exclusively in brain and intestine. Isoform 4: Expressed exclusively in testis and intestine.

It is found in the cytoplasm. It localises to the cytosol. The protein resides in the membrane. The enzyme catalyses O-phospho-L-seryl-[protein] + H2O = L-seryl-[protein] + phosphate. It carries out the reaction O-phospho-L-threonyl-[protein] + H2O = L-threonyl-[protein] + phosphate. Enzyme with a broad specificity. Dephosphorylates PRKAA1 and PRKAA2. Inhibits TBK1-mediated antiviral signaling by dephosphorylating it at 'Ser-172'. Plays an important role in the termination of TNF-alpha-mediated NF-kappa-B activation through dephosphorylating and inactivating IKBKB/IKKB. This Mus musculus (Mouse) protein is Protein phosphatase 1B (Ppm1b).